We begin with the raw amino-acid sequence, 178 residues long: MLEKLIERVLFATRWLLAPLCIAMSLVLVVLGYVFMKELWHMLSHLDTISETDLVLSALGLVDLLFMAGLVLMVLLASYESFVSKLDKVDASEITWLKHTDFNALKLKVSLSIVAISAIFLLKRYMSLEDVLSSIPKDTPLSHNPIFWQVVIHLVFVCSALLAAVTNNIAFSQNNKGH.

The next 4 helical transmembrane spans lie at Trp-15–Phe-35, Leu-54–Val-74, Phe-102–Leu-122, and Pro-145–Val-165.

It belongs to the UPF0114 family.

Its subcellular location is the cell membrane. The polypeptide is UPF0114 protein HPSH_00970 (Helicobacter pylori (strain Shi470)).